Reading from the N-terminus, the 369-residue chain is Protein V (369 aa).

2 disordered regions span residues 1-24 (MDQD…GRES) and 38-320 (SEPT…GHRR). The span at 7–20 (ISKEDSEVEREASG) shows a compositional bias: basic and acidic residues. A compositionally biased stretch (polar residues) spans 50-61 (LHNTINTLQRPG). Basic and acidic residues-rich tracts occupy residues 99–110 (AEAHARNVDKQN) and 150–168 (GAED…RGED). Phosphoserine; by host is present on residues serine 249, serine 257, and serine 260. Zn(2+)-binding residues include histidine 318, cysteine 337, cysteine 341, cysteine 353, cysteine 355, cysteine 358, cysteine 362, and cysteine 365.

The protein belongs to the paramyxoviruses V protein family. As to quaternary structure, interacts with host IFIH1/MDA5 and DHX58/LGP2. Interacts with host IRF3. Interacts with host RIGI regulatory protein (via CARDs domain) and host TRIM25 (via SPRY domain); these interactions prevent TRIM25-mediated ubiquitination of RIG-I and disrupts downstream RIG-I signaling.

It localises to the host cytoplasm. In terms of biological role, plays an essential role in the inhibition of host immune response. Prevents the establishment of cellular antiviral state by blocking interferon-alpha/beta (IFN-alpha/beta) production and signaling pathway. Interacts with host IFIH1/MDA5 and DHX58/LGP2 to inhibit the transduction pathway involved in the activation of IFN-beta promoter, thus protecting the virus against cell antiviral state. Also interacts with and inhibits host IRF3. Blocks the type I interferon signaling pathway by disrupting the RIG-I signaling pathway. This Sendai virus (strain Hamamatsu) (SeV) protein is Protein V (P/V/C).